Here is a 95-residue protein sequence, read N- to C-terminus: Small ribosomal subunit protein bS6 (95 aa).

This sequence belongs to the bacterial ribosomal protein bS6 family.

Binds together with bS18 to 16S ribosomal RNA. The chain is Small ribosomal subunit protein bS6 from Exiguobacterium sp. (strain ATCC BAA-1283 / AT1b).